We begin with the raw amino-acid sequence, 466 residues long: 3-isopropylmalate dehydratase large subunit (466 aa).

[4Fe-4S] cluster is bound by residues Cys-347, Cys-407, and Cys-410.

Belongs to the aconitase/IPM isomerase family. LeuC type 1 subfamily. As to quaternary structure, heterodimer of LeuC and LeuD. It depends on [4Fe-4S] cluster as a cofactor.

It carries out the reaction (2R,3S)-3-isopropylmalate = (2S)-2-isopropylmalate. The protein operates within amino-acid biosynthesis; L-leucine biosynthesis; L-leucine from 3-methyl-2-oxobutanoate: step 2/4. Catalyzes the isomerization between 2-isopropylmalate and 3-isopropylmalate, via the formation of 2-isopropylmaleate. In Vibrio vulnificus (strain YJ016), this protein is 3-isopropylmalate dehydratase large subunit.